The following is a 197-amino-acid chain: Putative RNA-binding protein EEED8.12 (197 aa).

An RRM domain is found at 61–138; sequence KSVFIGNVDF…RPIVVTAKRT (78 aa). The disordered stretch occupies residues 142-166; that stretch reads GMGHGVRGSSRGTFGRGRGAARGAP.

This is Putative RNA-binding protein EEED8.12 from Caenorhabditis elegans.